The following is a 304-amino-acid chain: MSRIAYFGPVGTFTEQAARTFMAAGDELVAAETIPKALDAVRRGEADAACVPVENSVEGAVPATLDSLAVGEPLIGVAEALLPVHFSVLTRDDVGEIRTVASHPHALAQVRKWLEDNLPGARVVAAGSTAAAAVAVQAGEFDAAVTAPVAVEHYPLKVLATEVADVRDARTRFLLMRRPPVVLPEPTGADRTSIVAAAANRTGTLAELLTELATRGINLTRLDARPHKQNFGEYRFFIDFEGHVAEPRIADALAALRRRCRDVRFLGSFARADGVAATIEPAARNEDFTDAADWVAAVQRGEQA.

The 176-residue stretch at 3 to 178 (RIAYFGPVGT…ARTRFLLMRR (176 aa)) folds into the Prephenate dehydratase domain. An ACT domain is found at 193–271 (SIVAAAANRT…DVRFLGSFAR (79 aa)).

It carries out the reaction prephenate + H(+) = 3-phenylpyruvate + CO2 + H2O. It functions in the pathway amino-acid biosynthesis; L-phenylalanine biosynthesis; phenylpyruvate from prephenate: step 1/1. This chain is Prephenate dehydratase (pheA), found in Amycolatopsis methanolica.